A 226-amino-acid polypeptide reads, in one-letter code: UPF0758 protein SPT_1135 (226 aa).

An MPN domain is found at 103-225 (SILSSQKLAK…YFSYREKTDL (123 aa)). H174, H176, and D187 together coordinate Zn(2+). The JAMM motif motif lies at 174–187 (HNHPSGAVAPSQND).

Belongs to the UPF0758 family.

The polypeptide is UPF0758 protein SPT_1135 (Streptococcus pneumoniae (strain Taiwan19F-14)).